Here is a 155-residue protein sequence, read N- to C-terminus: MVLDKEEGVPMLSVQPKGKQKGCAGCNRKIKDRYLLKALDKYWHEDCLKCACCDCRLGEVGSTLYTKANLILCRRDYLRLFGTTGNCAACSKLIPAFEMVMRARDNVYHLDCFACQLCNQRFCVGDKFFLKNNMILCQMDYEEGQLNGSFETQVQ.

2 LIM zinc-binding domains span residues 21–83 (KGCA…LFGT) and 85–147 (GNCA…GQLN).

It localises to the nucleus. May be involved in gene regulation within neural lineage cells potentially by direct DNA binding or by binding to other transcription factors. The chain is Rhombotin-1 from Danio rerio (Zebrafish).